Consider the following 208-residue polypeptide: Uracil phosphoribosyltransferase (208 aa).

5-phospho-alpha-D-ribose 1-diphosphate-binding positions include Arg78, Arg103, and 130 to 138 (DPMLATGGS). Residues Ile193 and 198–200 (GDA) contribute to the uracil site. Asp199 is a binding site for 5-phospho-alpha-D-ribose 1-diphosphate.

Belongs to the UPRTase family. Mg(2+) is required as a cofactor.

It catalyses the reaction UMP + diphosphate = 5-phospho-alpha-D-ribose 1-diphosphate + uracil. It functions in the pathway pyrimidine metabolism; UMP biosynthesis via salvage pathway; UMP from uracil: step 1/1. Allosterically activated by GTP. In terms of biological role, catalyzes the conversion of uracil and 5-phospho-alpha-D-ribose 1-diphosphate (PRPP) to UMP and diphosphate. This is Uracil phosphoribosyltransferase from Haemophilus influenzae (strain PittEE).